Consider the following 483-residue polypeptide: Homoserine O-acetyltransferase (483 aa).

One can recognise an AB hydrolase-1 domain in the interval 47–346; the sequence is NVILICHALT…HFGHDAFLLE (300 aa). Residue S152 is the Nucleophile of the active site. R221 is a substrate binding site. Active-site residues include D307 and H340. Substrate is bound at residue D341. 2 consecutive CBS domains span residues 367-423 and 428-483; these read MSED…KISS and LSRD…KGTK.

The protein belongs to the AB hydrolase superfamily. MetX family. In terms of assembly, homodimer.

It is found in the cytoplasm. It carries out the reaction L-homoserine + acetyl-CoA = O-acetyl-L-homoserine + CoA. It functions in the pathway amino-acid biosynthesis; L-methionine biosynthesis via de novo pathway; O-acetyl-L-homoserine from L-homoserine: step 1/1. Its function is as follows. Transfers an acetyl group from acetyl-CoA to L-homoserine, forming acetyl-L-homoserine. The polypeptide is Homoserine O-acetyltransferase (Methanohalophilus mahii (strain ATCC 35705 / DSM 5219 / SLP)).